The primary structure comprises 37 residues: Large ribosomal subunit protein bL36 (37 aa).

It belongs to the bacterial ribosomal protein bL36 family.

The chain is Large ribosomal subunit protein bL36 from Pelotomaculum thermopropionicum (strain DSM 13744 / JCM 10971 / SI).